Consider the following 266-residue polypeptide: Ankyrin repeat domain-containing protein 45 (266 aa).

2 stretches are compositionally biased toward acidic residues: residues 1–11 (MESEGPPESES) and 18–32 (QEEE…EPEE). The segment at 1–43 (MESEGPPESESSEFFSQQEEENEEEEAQEPEETGPKNPLLQPA) is disordered. ANK repeat units follow at residues 76-105 (VGRN…NLNE) and 109-138 (RGYT…DIEA).

It localises to the cytoplasm. It is found in the midbody. The protein localises to the midbody ring. Its subcellular location is the cleavage furrow. In terms of biological role, may play a role during cell division. The protein is Ankyrin repeat domain-containing protein 45 of Homo sapiens (Human).